The sequence spans 2529 residues: Zinc finger FYVE domain-containing protein 26 (2529 aa).

Disordered regions lie at residues histidine 584–histidine 650, serine 689–arginine 709, and valine 733–threonine 810. 2 positions are modified to phosphoserine: serine 605 and serine 609. Over residues serine 689–glutamate 701 the composition is skewed to basic and acidic residues. The span at serine 755 to arginine 765 shows a compositional bias: basic residues. Low complexity predominate over residues serine 778–serine 796. A Phosphoserine modification is found at serine 791. Polar residues predominate over residues alanine 797–threonine 810. A coiled-coil region spans residues methionine 859–aspartate 884. A disordered region spans residues glycine 1258–serine 1286. Residues threonine 1263–proline 1273 show a composition bias toward polar residues. A compositionally biased stretch (basic and acidic residues) spans serine 1274 to proline 1283. Residues valine 1488 to leucine 1515 adopt a coiled-coil conformation. Residues serine 1732, serine 1754, serine 1770, and serine 1772 each carry the phosphoserine modification. The interval alanine 1762–tryptophan 1799 is disordered. An FYVE-type zinc finger spans residues aspartate 1802 to asparagine 1862. Zn(2+)-binding residues include cysteine 1808, cysteine 1811, cysteine 1825, cysteine 1828, cysteine 1833, cysteine 1836, cysteine 1854, and cysteine 1857. Residues threonine 1865–proline 1884 form a disordered region.

The protein belongs to the ZFYVE26 family. As to quaternary structure, interacts with AP5Z1, AP5B1, AP5S1 and SPG11. Interacts with TTC19 and KIF13A.

It is found in the cytoplasm. The protein resides in the cytoskeleton. Its subcellular location is the microtubule organizing center. It localises to the centrosome. The protein localises to the midbody. Phosphatidylinositol 3-phosphate-binding protein required for the abscission step in cytokinesis: recruited to the midbody during cytokinesis and acts as a regulator of abscission. May also be required for efficient homologous recombination DNA double-strand break repair. The sequence is that of Zinc finger FYVE domain-containing protein 26 (Zfyve26) from Mus musculus (Mouse).